The chain runs to 680 residues: tRNA 5-methylaminomethyl-2-thiouridine biosynthesis bifunctional protein MnmC (680 aa).

The tRNA (mnm(5)s(2)U34)-methyltransferase stretch occupies residues 1-267 (MTAEPNKPCQ…MAAILSSDAP (267 aa)). The tract at residues 273-680 (IGGGLASAHL…LRKLLKGKSL (408 aa)) is FAD-dependent cmnm(5)s(2)U34 oxidoreductase.

It in the N-terminal section; belongs to the methyltransferase superfamily. tRNA (mnm(5)s(2)U34)-methyltransferase family. In the C-terminal section; belongs to the DAO family. FAD is required as a cofactor.

The protein localises to the cytoplasm. The catalysed reaction is 5-aminomethyl-2-thiouridine(34) in tRNA + S-adenosyl-L-methionine = 5-methylaminomethyl-2-thiouridine(34) in tRNA + S-adenosyl-L-homocysteine + H(+). Functionally, catalyzes the last two steps in the biosynthesis of 5-methylaminomethyl-2-thiouridine (mnm(5)s(2)U) at the wobble position (U34) in tRNA. Catalyzes the FAD-dependent demodification of cmnm(5)s(2)U34 to nm(5)s(2)U34, followed by the transfer of a methyl group from S-adenosyl-L-methionine to nm(5)s(2)U34, to form mnm(5)s(2)U34. This chain is tRNA 5-methylaminomethyl-2-thiouridine biosynthesis bifunctional protein MnmC, found in Shewanella sp. (strain W3-18-1).